We begin with the raw amino-acid sequence, 358 residues long: Alanine racemase (358 aa).

The Proton acceptor; specific for D-alanine role is filled by K34. K34 is modified (N6-(pyridoxal phosphate)lysine). R129 contacts substrate. The active-site Proton acceptor; specific for L-alanine is Y254. M302 serves as a coordination point for substrate.

The protein belongs to the alanine racemase family. It depends on pyridoxal 5'-phosphate as a cofactor.

It catalyses the reaction L-alanine = D-alanine. Its pathway is amino-acid biosynthesis; D-alanine biosynthesis; D-alanine from L-alanine: step 1/1. In terms of biological role, catalyzes the interconversion of L-alanine and D-alanine. May also act on other amino acids. In Aliivibrio salmonicida (strain LFI1238) (Vibrio salmonicida (strain LFI1238)), this protein is Alanine racemase (alr).